A 482-amino-acid chain; its full sequence is Histone deacetylase 1 (482 aa).

The segment at 9–321 (RKVCYYYDGD…WTYETAVALD (313 aa)) is histone deacetylase. Positions 27 and 31 each coordinate 1D-myo-inositol 1,4,5,6-tetrakisphosphate. An N6-acetyllysine; alternate modification is found at K74. A Glycyl lysine isopeptide (Lys-Gly) (interchain with G-Cter in SUMO2); alternate cross-link involves residue K74. Residue H141 is part of the active site. 2 residues coordinate Zn(2+): D176 and H178. K220 bears the N6-acetyllysine mark. At C261 the chain carries S-nitrosocysteine. D264 is a Zn(2+) binding site. R270 lines the 1D-myo-inositol 1,4,5,6-tetrakisphosphate pocket. C273 bears the S-nitrosocysteine mark. Over residues 390-400 (PEESGDEDEED) the composition is skewed to acidic residues. Residues 390 to 482 (PEESGDEDEE…KGVKEEVKLA (93 aa)) form a disordered region. A phosphoserine mark is found at S393, S406, S409, S421, and S423. Residues 401 to 416 (PDKRISICSSDKRIAC) are compositionally biased toward basic and acidic residues. The span at 417–427 (EEEFSDSDEEG) shows a compositional bias: acidic residues. The residue at position 432 (K432) is an N6-methylated lysine; by EHMT2. K438 is covalently cross-linked (Glycyl lysine isopeptide (Lys-Gly) (interchain with G-Cter in SUMO2)). Positions 443-482 (VKTEDEKEKDPEEKKEVTEEEKTKEEKQEAKGVKEEVKLA) are enriched in basic and acidic residues. K444 is covalently cross-linked (Glycyl lysine isopeptide (Lys-Gly) (interchain with G-Cter in SUMO2); alternate). K444 participates in a covalent cross-link: Glycyl lysine isopeptide (Lys-Gly) (interchain with G-Cter in SUMO); alternate. Glycyl lysine isopeptide (Lys-Gly) (interchain with G-Cter in SUMO2) cross-links involve residues K456, K457, and K473. K476 participates in a covalent cross-link: Glycyl lysine isopeptide (Lys-Gly) (interchain with G-Cter in SUMO2); alternate. K476 is covalently cross-linked (Glycyl lysine isopeptide (Lys-Gly) (interchain with G-Cter in SUMO); alternate). Residue K480 forms a Glycyl lysine isopeptide (Lys-Gly) (interchain with G-Cter in SUMO2) linkage.

It belongs to the histone deacetylase family. HD type 1 subfamily. Part of the core histone deacetylase (HDAC) complex composed of HDAC1, HDAC2, RBBP4 and RBBP7, the core complex associates with SIN3, SAP18 and SAP30 to form the SIN3 HDAC complex. Component of the nucleosome remodeling and deacetylase (NuRD) repressor complex, composed of core proteins MTA1, MTA2, MTA3, RBBP4, RBBP7, HDAC1, HDAC2, MBD2, MBD3, and peripherally associated proteins CDK2AP1, CDK2AP2, GATAD2A, GATAD2B, CHD3, CHD4 and CHD5. The exact stoichiometry of the NuRD complex is unknown, and some subunits such as MBD2 and MBD3, GATAD2A and GATAD2B, and CHD3, CHD4 and CHD5 define mutually exclusive NuRD complexes. Component of a BHC histone deacetylase complex that contains HDAC1, HDAC2, HMG20B/BRAF35, KDM1A, RCOR1/CoREST and PHF21A/BHC80. The BHC complex may also contain ZMYM2, ZNF217, ZMYM3, GSE1 and GTF2I. Component of a mSin3A corepressor complex that contains SIN3A, SAP130, SUDS3/SAP45, ARID4B/SAP180, HDAC1 and HDAC2. Found in a trimeric complex with APBB1 and TSHZ3; the interaction between HDAC1 and APBB1 is mediated by TSHZ3. Forms a complex comprising APPL1, RUVBL2, APPL2, CTNNB1 and HDAC2. Component of a RCOR/GFI/KDM1A/HDAC complex. Part of a complex composed of TRIM28, HDAC1, HDAC2 and EHMT2. Part of a complex containing at least CDYL, MIER1, MIER2, HDAC1 and HDAC2. The large PER complex involved in the histone deacetylation is composed of at least HDAC1, PER2, SFPQ and SIN3A. Associates with the 9-1-1 complex; interacts with HUS1. Found in a complex with DNMT3A and HDAC7. Found in a complex with YY1, SIN3A and GON4L. Identified in a histone deacetylase complex that contains DNTTIP1, HDAC1 and MIDEAS; this complex assembles into a tetramer that contains four copies of each protein chain. Found in a complex composed of at least SINHCAF, SIN3A, HDAC1, SAP30, RBBP4, OGT and TET1. Component of the SIN3B complex, which includes SIN3B, HDAC1, PHF12 and MORF4L1. Interacts with GFI1; the interaction is direct. Interacts directly with GFI1B. Interacts with TSHZ3 (via N-terminus); the interaction is direct. Interacts with APEX1; the interaction is not dependent on the acetylated status of APEX1. Interacts with BANP. Interacts with BAZ2A/TIP5. Interacts with BCL6. Interacts with BCOR. Interacts with BHLHE40/DEC1. Interacts with BRCC3; this interaction is enhanced in the presence of PWWP2B. Interacts with BRMS1. Interacts with BRMS1L. Interacts with C10orf90/FATS (via its N-terminal); the interaction prevents binding of HDAC1 to CDKN1A/p21 and facilitates the acetylation and stabilization of CDKN1A/p21. Interacts with CBFA2T3. Interacts with CCAR2. Interacts with CDK2AP1. Interacts with CHD3. Interacts with CHD4. Interacts with CHFR. Interacts with CIART. Interacts with CDKN1A/p21. Interacts with CDK5 complexed to CDK5R1 (p25). Interacts with CRY1. Interacts with DAXX. Interacts with DDIT3/CHOP. Interacts with DDX5. Interacts with DHX36; this interaction occurs in a RNA-dependent manner. Interacts with DNMT1. Interacts with DNTTIP1. Interacts with E4F1. Interacts with EP300. Interacts with ERCC6. Interacts with GATAD2A. Interacts with HCFC1. Interacts with HDAC9. Interacts with HUS1. Interacts with INSM1. Interacts with KDM4A. Interacts with KDM5A; this interaction impairs histone deacetylation. Interacts with KDM5B. Interacts with KLF1. Interacts with MBD3L2. Interacts with MIER1. Interacts with NFE4. Interacts with NR4A2/NURR1. Interacts with NR1D2 (via C-terminus). Interacts with NRIP1. Interacts with NSD2. Interacts with PACS2. Interacts with PHB2. Interacts with PPHLN1. Interacts with PRDM6. Interacts with PRDM16. Interacts with PWWP2A in a MTA1-dependent manner. Interacts with PWWP2B. Interacts with RB1. Interacts with RERE. Interacts with SANBR (via the BTB domain). Interacts with SAMSN1. Interacts with SAP30L. Interacts with SETDB1. Interacts with SIN3A. Interacts with SMAD3. Interacts with SMAD4; positively regulated by ZBTB7A. Interacts with SMARCAD1. Interacts with SMARCA4/BRG1. Interacts with SMYD2. Interacts with SMYD4 (via MYND-type zinc finger). Interacts with SP1; the interaction deacetylates SP1 and regulates its transcriptional activity. Interacts with SP3; the interaction deacetylates SP3 and regulates its transcriptional activity. In vitro, C(18) ceramides increase this interaction and the subsequent SP3 deacetylation and SP3-mediated repression of the TERT promoter. Interacts with SPEN/MINT. Interacts with SPHK2. Interacts with SUV39H1. Interacts with TGIF. Interacts with TGIF2. Interacts with TRAF6. Interacts with TRIM28; the interaction recruits HDAC1 to E2F1 and inhibits its acetylation. Interacts with TSC22D3 isoform 1; this interaction affects HDAC1 activity on MYOG promoter and thus inhibits MYOD1 transcriptional activity. Interacts with UHRF1. Interacts with UHRF2. Interacts with ZBTB7A. Interacts with ZMYND8. Interacts with ZMYND15. Interacts with ZNF431. Interacts with ZNF516; this interaction is enhanced in the presence of PWWP2B. Interacts with ZNF541. Interacts with ZNF638. Interacts with ZNHIT1. Interacts with the non-histone region of MACROH2A1. Identified in a complex with HDAC2, KCTD19, DNTTIP1 and ZNF541. Interacts with MSX3. Interacts with VRK1. Requires Zn(2+) as cofactor. Sumoylated on Lys-444 and Lys-476; which promotes enzymatic activity. Desumoylated by SENP1. Post-translationally, phosphorylation on Ser-421 and Ser-423 promotes enzymatic activity and interactions with NuRD and SIN3 complexes. Phosphorylated by CDK5. In terms of processing, ubiquitinated by CHFR and KCTD11, leading to its degradation by the proteasome.

It localises to the nucleus. It carries out the reaction N(6)-acetyl-L-lysyl-[histone] + H2O = L-lysyl-[histone] + acetate. The catalysed reaction is N(6)-acetyl-L-lysyl-[protein] + H2O = L-lysyl-[protein] + acetate. The enzyme catalyses N(6)-(2E)-butenoyl-L-lysyl-[protein] + H2O = (2E)-2-butenoate + L-lysyl-[protein]. It catalyses the reaction N(6)-[(S)-lactoyl]-L-lysyl-[protein] + H2O = (S)-lactate + L-lysyl-[protein]. Its activity is regulated as follows. Inositol tetraphosphate (1D-myo-inositol 1,4,5,6-tetrakisphosphate) may act as an intermolecular glue between HDAC1 and N-Cor repressor complex components. Its function is as follows. Histone deacetylase that catalyzes the deacetylation of lysine residues on the N-terminal part of the core histones (H2A, H2B, H3 and H4). Histone deacetylation gives a tag for epigenetic repression and plays an important role in transcriptional regulation, cell cycle progression and developmental events. Histone deacetylases act via the formation of large multiprotein complexes. Acts as a component of the histone deacetylase NuRD complex which participates in the remodeling of chromatin. As part of the SIN3B complex is recruited downstream of the constitutively active genes transcriptional start sites through interaction with histones and mitigates histone acetylation and RNA polymerase II progression within transcribed regions contributing to the regulation of transcription. Also functions as a deacetylase for non-histone targets, such as NR1D2, RELA, SP1, SP3, STAT3 and TSHZ3. Deacetylates SP proteins, SP1 and SP3, and regulates their function. Component of the BRG1-RB1-HDAC1 complex, which negatively regulates the CREST-mediated transcription in resting neurons. Upon calcium stimulation, HDAC1 is released from the complex and CREBBP is recruited, which facilitates transcriptional activation. Deacetylates TSHZ3 and regulates its transcriptional repressor activity. Deacetylates 'Lys-310' in RELA and thereby inhibits the transcriptional activity of NF-kappa-B. Deacetylates NR1D2 and abrogates the effect of KAT5-mediated relieving of NR1D2 transcription repression activity. Component of a RCOR/GFI/KDM1A/HDAC complex that suppresses, via histone deacetylase (HDAC) recruitment, a number of genes implicated in multilineage blood cell development. Involved in CIART-mediated transcriptional repression of the circadian transcriptional activator: CLOCK-BMAL1 heterodimer. Required for the transcriptional repression of circadian target genes, such as PER1, mediated by the large PER complex or CRY1 through histone deacetylation. In addition to protein deacetylase activity, also has protein-lysine deacylase activity: acts as a protein decrotonylase and delactylase by mediating decrotonylation ((2E)-butenoyl) and delactylation (lactoyl) of histones, respectively. The sequence is that of Histone deacetylase 1 (HDAC1) from Bos taurus (Bovine).